A 114-amino-acid chain; its full sequence is PDZK1-interacting protein 1 (114 aa).

Residues 1-28 (MSAFGLLILGLLTAVPPASCRQGLGNLQ) lie on the Extracellular side of the membrane. Residues 29-51 (PWMQGLIAVAVFLVLVAIAFAVN) traverse the membrane as a helical segment. The Cytoplasmic segment spans residues 52–114 (HFWCQEEPEP…EEGKVRSTPM (63 aa)). A Phosphoserine modification is found at S85. The segment at 95 to 114 (HENAYENVPEEEGKVRSTPM) is disordered. A compositionally biased stretch (basic and acidic residues) spans 105-114 (EEGKVRSTPM).

This sequence belongs to the PDZK1-interacting protein 1/SMIM24 family. In terms of assembly, forms a heterodimer (via N-terminal transmembrane helix) with SLC5A2/SGLT2 (via TM13); this interaction enhances SLC5A2 transporter activity. Interacts with PDZK1.

It localises to the apical cell membrane. In terms of biological role, auxiliary protein of electrogenic Na(+)-coupled sugar symporter SLC5A2/SGLT2 and SLC5A1/SGLT1. Essential for the transporter activity of SLC5A2/SGLT2 but not SLC5A1/SGLT1. The protein is PDZK1-interacting protein 1 of Pongo abelii (Sumatran orangutan).